Reading from the N-terminus, the 137-residue chain is Hemoglobin subunit alpha-2 (137 aa).

One can recognise a Globin domain in the interval 1 to 137 (DDRSHILAIW…VGGSLTSKYR (137 aa)). Position 54 (His54) interacts with O2. Position 83 (His83) interacts with heme b.

The protein belongs to the globin family. Post-translationally, the N-terminus of the mature protein is acetylated. As to expression, red blood cells.

This is Hemoglobin subunit alpha-2 from Telmatobius peruvianus (Andean frog).